The primary structure comprises 129 residues: uncharacterized protein (129 aa).

A VOC domain is found at Gln-6–Gln-129. A divalent metal cation-binding residues include His-9, Glu-57, His-78, and Glu-125.

The protein to B.subtilis YwkD.

This is an uncharacterized protein from Escherichia coli (strain K12).